Reading from the N-terminus, the 943-residue chain is MQDKLIIRGARAHNLKNIDVEIPRDKLIVMTGLSGSGKSSLAFDTIYAEGQRRYVESLSAYARQFLGNMDKPDVDSIDGLSPAISIDQKTTSKNPRSTVGTVTEINDYLRLLYARVGIPYCKNGHGAITASSVEQIVDQVLILPERTRMQILAPVVRRKKGQHKAVFDRIQKDGYVRVRIDGDIMDVAEVPELSKNKMHNIEVVVDRLVQKDGIRGRLFDSIEAALHLGDGYVIIDTMDDHELIFSEHYSCPVCGFTVPELEPRLFSFNAPFGSCPTCDGLGIKLEVDLDLVIPDENKTLREGTLAPWNPISSNYYPQLLEQAMNAFGVDMDKPWKDLSDEDKKLVLHGSGDTAFHFHYQNDFGGVRDIDIPFEGIISNISRRYHETNSDFTRNVMRSYMNELPCATCHGYRLNDQALSVRVGGKEGLNIGQVSELSIADHLSLLTHLELSENEKTIATPIVKEIKDRLTFLNNVGLNYLTLSRSAGTLSGGESQRIRLATQIGSNLSGVLYILDEPSIGLHQRDNDRLISSLKKMRDLGNTLIVVEHDEDTMMAADWLVDVGPGAGALGGEIVASGTPRQVAKNKKSITGQYLSGKKKIPVPLDRRKGSGRFIEIKGAAENNLQNINVKFPLGKFIAVTGVSGSGKSTLVNSILKKVIAQKLNRNSEKPGKYKSISGIEHIDRLIDIDQSPIGRTPRSNPATYTGVFDDIRDLFAQTNEAKIRGYKKGRFSFNVKGGRCEACSGDGIIKIEMHFLPDVYVPCEVCHGTRYNSETLEVHYKDKNIAEILNMTVNDAAEFFAPIPKIARKIRTIKDVGLGYVTLGQPATTLSGGEAQRMKLASELHKRSTGKSFYILDEPTTGLHTDDIARLLKVLERFVDDGNTVLVIEHNLDVIKTADHIIDLGPEGGVGGGQVIATGTPEQVAEMTESYTGQYLKGRLNEK.

ATP is bound at residue 32 to 39 (GLSGSGKS). The C4-type zinc-finger motif lies at 251–278 (CPVCGFTVPELEPRLFSFNAPFGSCPTC). 2 ABC transporter domains span residues 308 to 589 (WNPI…KKSI) and 609 to 937 (GSGR…QYLK). An ATP-binding site is contributed by 641-648 (GVSGSGKS). The C4-type zinc finger occupies 740–766 (CEACSGDGIIKIEMHFLPDVYVPCEVC).

Belongs to the ABC transporter superfamily. UvrA family. In terms of assembly, forms a heterotetramer with UvrB during the search for lesions.

The protein localises to the cytoplasm. The UvrABC repair system catalyzes the recognition and processing of DNA lesions. UvrA is an ATPase and a DNA-binding protein. A damage recognition complex composed of 2 UvrA and 2 UvrB subunits scans DNA for abnormalities. When the presence of a lesion has been verified by UvrB, the UvrA molecules dissociate. The sequence is that of UvrABC system protein A from Streptococcus mutans serotype c (strain ATCC 700610 / UA159).